A 297-amino-acid polypeptide reads, in one-letter code: Halorhodopsin (297 aa).

The segment at 1–31 (MRSRTYHDQSVCGPYGSQRTDCDRDTDAGSD) is disordered. Residues 1-45 (MRSRTYHDQSVCGPYGSQRTDCDRDTDAGSDTDVHGAQVATQIRT) lie on the Extracellular side of the membrane. A helical transmembrane segment spans residues 46–71 (DTLLHSSLWVNIALAGLSILVFLYMA). Residues 72 to 77 (RTVRAN) lie on the Cytoplasmic side of the membrane. The chain crosses the membrane as a helical span at residues 78-101 (RARLIVGATLMIPLVSLSSYLGLV). Over 102–125 (TGLTAGPIEMPAAHALAGEDVLSQ) the chain is Extracellular. The helical transmembrane segment at 126–147 (WGRYLTWTLSTPMILLALGWLA) threads the bilayer. Residues 148-150 (EVD) lie on the Cytoplasmic side of the membrane. Residues 151-174 (TADLFVVIAADIGMCLTGLAAALT) form a helical membrane-spanning segment. Over 175-177 (TSS) the chain is Extracellular. A helical transmembrane segment spans residues 178 to 200 (YAFRWAFYLVSTAFFVVVLYALL). At 201 to 212 (AKWPTNAEAAGT) the chain is on the cytoplasmic side. A helical transmembrane segment spans residues 213-236 (GDIFGTLRWLTVILWLGYPILWAL). Residues 237–246 (GVEGFALVDS) lie on the Extracellular side of the membrane. Residues 247–275 (VGLTSWGYSLLDIGAKYLFAALLLRWVAN) form a helical membrane-spanning segment. Lys262 is modified (N6-(retinylidene)lysine). Over 276–297 (NERTIAVGQRSGRGAIGDPVED) the chain is Cytoplasmic.

It belongs to the archaeal/bacterial/fungal opsin family.

It is found in the cell membrane. Light-driven chloride pump. This Haloterrigena sp. (strain arg-4) protein is Halorhodopsin (hop).